Reading from the N-terminus, the 199-residue chain is Pre T-cell antigen receptor alpha (199 aa).

An N-terminal signal peptide occupies residues 1-16 (MARTWLLLLLGVRCQA). Over 17–146 (LPSGIAGTPF…PEPLGGTQRQ (130 aa)) the chain is Extracellular. Cys47 and Cys107 form a disulfide bridge. 2 N-linked (GlcNAc...) asparagine glycosylation sites follow: Asn67 and Asn117. Residues 147 to 167 (VLWLSLLRLLLFKLLLLDVLL) traverse the membrane as a helical segment. Residues 168-199 (TCSHLRLHVLAGQHLQPPPSRKSLPPTHRIWT) are Cytoplasmic-facing.

As to quaternary structure, heterodimer with TCRB; disulfide linked. This heterodimer assembles with CD3 proteins into a signaling-competent pre-T-cell receptor complex. Interacts with RHBDD1. Isoform 1 is expressed at higher levels than isoform 2 in the thymus while only isoform 2 is expressed in polyclonal beta-only cells. Isoform 1 shows a predominant expression in immature thymocytes.

The protein resides in the membrane. It localises to the cell membrane. In terms of biological role, component of the pre-T-cell receptor complex (composed of PTCRA, TCRB and the CD3 complex) that plays a crucial role in early T-cell development, particularly alpha-beta T cell differentiation. Isoform 1 acts to retain most TCRB intracellularly, while isoform 2 permits higher levels of cell surface TCRB expression and facilitates signaling from the CD3-TCRB complex. In Mus musculus (Mouse), this protein is Pre T-cell antigen receptor alpha.